The chain runs to 156 residues: ATP synthase subunit b (156 aa).

A helical membrane pass occupies residues 11–31 (AIAFAIFVMFCMKFVWPPLIG).

Belongs to the ATPase B chain family. F-type ATPases have 2 components, F(1) - the catalytic core - and F(0) - the membrane proton channel. F(1) has five subunits: alpha(3), beta(3), gamma(1), delta(1), epsilon(1). F(0) has three main subunits: a(1), b(2) and c(10-14). The alpha and beta chains form an alternating ring which encloses part of the gamma chain. F(1) is attached to F(0) by a central stalk formed by the gamma and epsilon chains, while a peripheral stalk is formed by the delta and b chains.

It localises to the cell inner membrane. In terms of biological role, f(1)F(0) ATP synthase produces ATP from ADP in the presence of a proton or sodium gradient. F-type ATPases consist of two structural domains, F(1) containing the extramembraneous catalytic core and F(0) containing the membrane proton channel, linked together by a central stalk and a peripheral stalk. During catalysis, ATP synthesis in the catalytic domain of F(1) is coupled via a rotary mechanism of the central stalk subunits to proton translocation. Its function is as follows. Component of the F(0) channel, it forms part of the peripheral stalk, linking F(1) to F(0). The polypeptide is ATP synthase subunit b (Psychrobacter cryohalolentis (strain ATCC BAA-1226 / DSM 17306 / VKM B-2378 / K5)).